The chain runs to 1610 residues: Voltage-dependent L-type calcium channel subunit alpha-1D (1610 aa).

The segment at 1–99 (MMMMMMKKMQ…SKKQGNSSNS (99 aa)) is disordered. Topologically, residues 1–125 (MMMMMMKKMQ…RACISIVEWK (125 aa)) are cytoplasmic. Positions 37-51 (GPTSQPNSSKQTVLS) are enriched in polar residues. Residues 53-66 (QAAIDAARQAKAAQ) are compositionally biased toward low complexity. The segment covering 81 to 92 (QRKRQQYAKSKK) has biased composition (basic residues). The stretch at 112 to 408 (NPIRRACISI…LVLGVLSGEF (297 aa)) is one I repeat. The chain crosses the membrane as a helical span at residues 126–144 (PFDIFILLAIFANCVALAI). Residues 145–162 (YIPFPEDDSNSTNHNLEK) lie on the Extracellular side of the membrane. N-linked (GlcNAc...) asparagine glycosylation is present at Asn154. The chain crosses the membrane as a helical span at residues 163-182 (VEYAFLIIFTVETFLKIIAY). At 183 to 194 (GLLLHPNAYVRN) the chain is on the cytoplasmic side. The chain crosses the membrane as a helical span at residues 195-213 (GWNLLDFVIVIVGLFSVIL). The Extracellular portion of the chain corresponds to 214–234 (EQLTKETEGGNHSSGKSGGFD). A glycan (N-linked (GlcNAc...) asparagine) is linked at Asn224. Residues 235-253 (VKALRAFRVLRPLRLVSGV) traverse the membrane as a helical segment. Topologically, residues 254 to 272 (PSLQVVLNSIIKAMVPLLH) are cytoplasmic. The helical transmembrane segment at 273–292 (IALLVLFVIIIYAIIGLELF) threads the bilayer. Residues 293–380 (IGKMHKTCFF…WMNDAMGFEL (88 aa)) lie on the Extracellular side of the membrane. N-linked (GlcNAc...) asparagine glycosylation is present at Asn328. Residue Glu363 coordinates Ca(2+). The helical transmembrane segment at 381-405 (PWVYFVSLVIFGSFFVLNLVLGVLS) threads the bilayer. At 406-522 (GEFSKEREKA…RRCRAAVKSV (117 aa)) the chain is on the cytoplasmic side. Residues 428 to 445 (EQLEEDLKGYLDWITQAE) are binding to the beta subunit. Positions 448 to 487 (DPENEEEGGEEGKRNTSMPTSETESVNTENVSGEGETQGS) are disordered. The span at 462-487 (NTSMPTSETESVNTENVSGEGETQGS) shows a compositional bias: polar residues. Residues 508–754 (NRFNRRRCRA…VFLAIAVDNL (247 aa)) form an II repeat. Residues 523-542 (TFYWLVIVLVFLNTLTISSE) form a helical membrane-spanning segment. Topologically, residues 543 to 557 (HYNQPDWLTQIQDIA) are extracellular. Residues 558-576 (NKVLLALFTCEMLVKMYSL) traverse the membrane as a helical segment. Topologically, residues 577–584 (GLQAYFVS) are cytoplasmic. A helical membrane pass occupies residues 585 to 603 (LFNRFDCFVVCGGITETIL). Over 604–613 (VELELMSPLG) the chain is Extracellular. Residues 614 to 632 (VSVFRCVRLLRIFKVTRHW) form a helical membrane-spanning segment. Residues 633–651 (TSLSNLVASLLNSMKSIAS) lie on the Cytoplasmic side of the membrane. A helical membrane pass occupies residues 652-672 (LLLLLFLFIIIFSLLGMQLFG). Residues 673-726 (GKFNFDETQTKRSTFDNFPQALLTVFQILTGEDWNAVMYDGIMAYGGPSSSGMI) lie on the Extracellular side of the membrane. Residue Glu704 participates in Ca(2+) binding. The helical transmembrane segment at 727-751 (VCIYFIILFICGNYILLNVFLAIAV) threads the bilayer. Residues 752–884 (DNLADAESLN…VGCHKLINHH (133 aa)) lie on the Cytoplasmic side of the membrane. Residues 765-789 (KEEAEEKERKKIARKESLENKKNNK) are compositionally biased toward basic and acidic residues. The interval 765–846 (KEEAEEKERK…VPAGPRPRRI (82 aa)) is disordered. Residues 790 to 801 (PEVNQIANSDNK) are compositionally biased toward polar residues. The span at 824 to 836 (VGEEEEEEEEEPE) shows a compositional bias: acidic residues. Residues 871-1153 (NPIRVGCHKL…IFVGFVIVTF (283 aa)) form an III repeat. The helical transmembrane segment at 885-903 (IFTNLILVFIMLSSAALAA) threads the bilayer. The Extracellular segment spans residues 904–919 (EDPIRSHSFRNTILGY). Residues 920 to 939 (FDYAFTAIFTVEILLKMTTF) traverse the membrane as a helical segment. Residues 940–951 (GAFLHKGAFCRN) are Cytoplasmic-facing. The helical transmembrane segment at 952-970 (YFNLLDMLVVGVSLVSFGI) threads the bilayer. At 971-976 (QSSAIS) the chain is on the extracellular side. A helical membrane pass occupies residues 977–996 (VVKILRVLRVLRPLRAINRA). The Cytoplasmic portion of the chain corresponds to 997 to 1015 (KGLKHVVQCVFVAIRTIGN). The helical transmembrane segment at 1016-1035 (IMIVTTLLQFMFACIGVQLF) threads the bilayer. Over 1036 to 1125 (KGKFYRCTDE…AGPVYNHRVE (90 aa)) the chain is Extracellular. Residues 1073–1163 (RIWQNSDFNF…QEQGEKEYKN (91 aa)) form a dihydropyridine binding region. Glu1099 contributes to the Ca(2+) binding site. A helical membrane pass occupies residues 1126-1146 (ISIFFIIYIIIVAFFMMNIFV). The Cytoplasmic portion of the chain corresponds to 1147–1203 (GFVIVTFQEQGEKEYKNCELDKNQRQCVEYALKARPLRRYIPKNPYQYKFWYVVNSS). One copy of the IV repeat lies at 1190 to 1465 (NPYQYKFWYV…LFVAVIMDNF (276 aa)). The helical transmembrane segment at 1204–1222 (PFEYMMFVLIMLNTLCLAM) threads the bilayer. At 1223–1237 (QHYEQSKMFNDAMDI) the chain is on the extracellular side. Residues 1238 to 1257 (LNMVFTGVFTVEMVLKVIAF) form a helical membrane-spanning segment. Residues 1258 to 1264 (KPKGYFS) are Cytoplasmic-facing. A helical membrane pass occupies residues 1265-1286 (DAWNTFDSLIVIGSIIDVALSE). The Extracellular portion of the chain corresponds to 1287–1311 (ADPTESESLPLPTATPGNSEESNRI). A helical membrane pass occupies residues 1312–1331 (SITFFRLFRVMRLVKLLSRG). Over 1332-1350 (EGIRTLLWTFIKSFQALPY) the chain is Cytoplasmic. Residues 1351-1370 (VALLIAMLFFIYAVIGMQMF) form a helical membrane-spanning segment. Topologically, residues 1371–1437 (GKVAMRDNNQ…GEEYTCGSNF (67 aa)) are extracellular. The segment at 1418–1484 (LCDPDSDYNP…LGPHHLDEFK (67 aa)) is dihydropyridine binding. Residues 1430 to 1473 (EYTCGSNFAIVYFISFYMLCAFLIINLFVAVIMDNFDYLTRDWS) are phenylalkylamine binding. Residues 1438 to 1462 (AIVYFISFYMLCAFLIINLFVAVIM) form a helical membrane-spanning segment. The Cytoplasmic segment spans residues 1463 to 1610 (DNFDYLTRDW…CFLSPSRSRS (148 aa)).

Belongs to the calcium channel alpha-1 subunit (TC 1.A.1.11) family. CACNA1D subfamily. In terms of assembly, voltage-dependent calcium channels are multisubunit complexes, consisting of alpha-1, alpha-2, beta and delta subunits in a 1:1:1:1 ratio. The channel activity is directed by the pore-forming and voltage-sensitive alpha-1 subunit. In many cases, this subunit is sufficient to generate voltage-sensitive calcium channel activity. The auxiliary subunits beta and alpha-2/delta linked by a disulfide bridge regulate the channel activity. Interacts with RIMBP2. Interacts with CABP1 and CABP4, resulting in a near elimination of calcium-dependent inactivation of the channel. Expressed in brain, heart and skeletal muscle.

Its subcellular location is the membrane. It carries out the reaction Ca(2+)(in) = Ca(2+)(out). In terms of biological role, voltage-sensitive calcium channels (VSCC) mediate the entry of calcium ions into excitable cells and are also involved in a variety of calcium-dependent processes, including muscle contraction, hormone or neurotransmitter release, gene expression, cell motility, cell division and cell death. The isoform alpha-1D gives rise to L-type calcium currents. Long-lasting (L-type) calcium channels belong to the 'high-voltage activated' (HVA) group. They are blocked by dihydropyridines (DHP), phenylalkylamines, and by benzothiazepines. The sequence is that of Voltage-dependent L-type calcium channel subunit alpha-1D (CACNA1D) from Mesocricetus auratus (Golden hamster).